The following is a 108-amino-acid chain: Small ribosomal subunit protein bS18 (108 aa).

Residues 1-12 (MSDITKQPANNI) show a composition bias toward polar residues. Residues 1 to 33 (MSDITKQPANNISSDDKKEVAKASAKSSVEGAK) form a disordered region.

This sequence belongs to the bacterial ribosomal protein bS18 family. As to quaternary structure, part of the 30S ribosomal subunit. Forms a tight heterodimer with protein bS6.

In terms of biological role, binds as a heterodimer with protein bS6 to the central domain of the 16S rRNA, where it helps stabilize the platform of the 30S subunit. The polypeptide is Small ribosomal subunit protein bS18 (Mycoplasmoides gallisepticum (strain R(low / passage 15 / clone 2)) (Mycoplasma gallisepticum)).